The sequence spans 152 residues: Flagellar assembly factor FliW (152 aa).

This sequence belongs to the FliW family. In terms of assembly, interacts with translational regulator CsrA and flagellin(s).

The protein localises to the cytoplasm. Functionally, acts as an anti-CsrA protein, binds CsrA and prevents it from repressing translation of its target genes, one of which is flagellin. Binds to flagellin and participates in the assembly of the flagellum. In Desulfitobacterium hafniense (strain DSM 10664 / DCB-2), this protein is Flagellar assembly factor FliW.